A 1171-amino-acid chain; its full sequence is DNA-directed RNA polymerase subunit beta (1171 aa).

The protein belongs to the RNA polymerase beta chain family. As to quaternary structure, the RNAP catalytic core consists of 2 alpha, 1 beta, 1 beta' and 1 omega subunit. When a sigma factor is associated with the core the holoenzyme is formed, which can initiate transcription.

It catalyses the reaction RNA(n) + a ribonucleoside 5'-triphosphate = RNA(n+1) + diphosphate. Functionally, DNA-dependent RNA polymerase catalyzes the transcription of DNA into RNA using the four ribonucleoside triphosphates as substrates. The protein is DNA-directed RNA polymerase subunit beta of Arthrobacter sp. (strain FB24).